The primary structure comprises 279 residues: Tryptophan synthase alpha chain (279 aa).

Active-site proton acceptor residues include Glu-49 and Asp-60.

The protein belongs to the TrpA family. In terms of assembly, tetramer of two alpha and two beta chains.

The catalysed reaction is (1S,2R)-1-C-(indol-3-yl)glycerol 3-phosphate + L-serine = D-glyceraldehyde 3-phosphate + L-tryptophan + H2O. It functions in the pathway amino-acid biosynthesis; L-tryptophan biosynthesis; L-tryptophan from chorismate: step 5/5. Its function is as follows. The alpha subunit is responsible for the aldol cleavage of indoleglycerol phosphate to indole and glyceraldehyde 3-phosphate. The sequence is that of Tryptophan synthase alpha chain from Nitrosospira multiformis (strain ATCC 25196 / NCIMB 11849 / C 71).